A 493-amino-acid chain; its full sequence is Tripartite motif-containing protein 5 (493 aa).

Residue alanine 2 is modified to N-acetylalanine. An RING-type zinc finger spans residues 15-59 (CPICLELLTQPLSLDCGHSFCQACLTANHKKSMLDKGESSCPVCR). Serine 86 is subject to Phosphoserine. Residues 90–132 (QKVDHCARHGEKLLLFCQEDGKVICWLCERSQEHRGHHTFLTE) form a B box-type zinc finger. Residues cysteine 95, histidine 98, cysteine 117, and histidine 123 each contribute to the Zn(2+) site. Positions 131–240 (TEEVAREYQV…LISDLERRLQ (110 aa)) form a coiled coil. The tract at residues 185-198 (FEQLRDILDWEESN) is required for interaction with GABARAP and for autophagy. The B30.2/SPRY domain occupies 281–493 (LKGMLEVFRE…VPMTLCSPSS (213 aa)).

Belongs to the TRIM/RBCC family. Can form homodimers and homotrimers. In addition to lower-order dimerization, also exhibits a higher-order multimerization and both low- and high-order multimerizations are essential for its restriction activity. Interacts with BTBD1 and BTBD2. Interacts with PSMC4, PSMC5, PSMD7 and HSPA8/HSC70. Interacts (via B30.2/SPRY domain) with HSPA1A/B. Interacts with PSMC2, MAP3K7/TAK1, TAB2 and TAB3. Interacts with SQSTM1. Interacts with TRIM6 and TRIM34. Interacts with ULK1 (phosphorylated form), GABARAP, GABARAPL1, GABARAPL2, MAP1LC3A, MAP1LC3C and BECN1. In terms of processing, degraded in a proteasome-independent fashion in the absence of viral infection but in a proteasome-dependent fashion following exposure to restriction sensitive virus. Autoubiquitinated in a RING finger- and UBE2D2-dependent manner. Monoubiquitinated by TRIM21. Deubiquitinated by Yersinia YopJ. Ubiquitination may not lead to proteasomal degradation.

It localises to the cytoplasm. The protein localises to the nucleus. It catalyses the reaction S-ubiquitinyl-[E2 ubiquitin-conjugating enzyme]-L-cysteine + [acceptor protein]-L-lysine = [E2 ubiquitin-conjugating enzyme]-L-cysteine + N(6)-ubiquitinyl-[acceptor protein]-L-lysine.. The protein operates within protein modification; protein ubiquitination. Its function is as follows. Capsid-specific restriction factor that prevents infection from non-host-adapted retroviruses. Blocks viral replication early in the life cycle, after viral entry but before reverse transcription. In addition to acting as a capsid-specific restriction factor, also acts as a pattern recognition receptor that activates innate immune signaling in response to the retroviral capsid lattice. Binding to the viral capsid triggers its E3 ubiquitin ligase activity, and in concert with the heterodimeric ubiquitin conjugating enzyme complex UBE2V1-UBE2N (also known as UBC13-UEV1A complex) generates 'Lys-63'-linked polyubiquitin chains, which in turn are catalysts in the autophosphorylation of the MAP3K7/TAK1 complex (includes TAK1, TAB2, and TAB3). Activation of the MAP3K7/TAK1 complex by autophosphorylation results in the induction and expression of NF-kappa-B and MAPK-responsive inflammatory genes, thereby leading to an innate immune response in the infected cell. Plays a role in regulating autophagy through activation of autophagy regulator BECN1 by causing its dissociation from its inhibitors BCL2 and TAB2. In Pan paniscus (Pygmy chimpanzee), this protein is Tripartite motif-containing protein 5 (TRIM5).